The primary structure comprises 493 residues: Aspartyl/glutamyl-tRNA(Asn/Gln) amidotransferase subunit B (493 aa).

This sequence belongs to the GatB/GatE family. GatB subfamily. Heterotrimer of A, B and C subunits.

It catalyses the reaction L-glutamyl-tRNA(Gln) + L-glutamine + ATP + H2O = L-glutaminyl-tRNA(Gln) + L-glutamate + ADP + phosphate + H(+). The enzyme catalyses L-aspartyl-tRNA(Asn) + L-glutamine + ATP + H2O = L-asparaginyl-tRNA(Asn) + L-glutamate + ADP + phosphate + 2 H(+). Allows the formation of correctly charged Asn-tRNA(Asn) or Gln-tRNA(Gln) through the transamidation of misacylated Asp-tRNA(Asn) or Glu-tRNA(Gln) in organisms which lack either or both of asparaginyl-tRNA or glutaminyl-tRNA synthetases. The reaction takes place in the presence of glutamine and ATP through an activated phospho-Asp-tRNA(Asn) or phospho-Glu-tRNA(Gln). This is Aspartyl/glutamyl-tRNA(Asn/Gln) amidotransferase subunit B from Aromatoleum aromaticum (strain DSM 19018 / LMG 30748 / EbN1) (Azoarcus sp. (strain EbN1)).